Here is a 434-residue protein sequence, read N- to C-terminus: MTVASQSIEEFKECLYHMQETRKLLTMQLLATGKITSAEIQILKRTLEEMQDERTTDFYIRHIHSRGATFAINIRDEILGLKKDFLFLENFASECESEESFTNRLKLCDLPGLLSNNQIDIRLMNGFAEEVAKCKEFLMDLITIESDGIKPLFITDWDGTMKDYCSQYATNLQPAYSAIVMGVFARNFTRAFAVLTAGPLRHPGILDLTSLPIDGPVMFSGSWGREWWLGGRRVVHDDGIPEEGSVAIGQLYEQLEEILHEGEFVQFALVGSGVQKKVDRLTLGVQTVFGQVPKELSAKYIDAVKERIHRVDPNSQYLILENCSPLEIEVCVHSSGAIWNKGDGVAALVEFNKDSLKLGKVCVAGDTTSDLPMLQKAAQENPTQVRALFVNVNKEIQSTINKIVGDSSRTCFISCPDVAHAAFAQIIIELTQNA.

Aspartate 156 and aspartate 158 together coordinate Mg(2+). Aspartate 158 (proton donor/acceptor) is an active-site residue. A substrate-binding site is contributed by glutamine 275–lysine 277. Aspartate 366 is a Mg(2+) binding site.

The protein belongs to the gob-1 trehalose phosphatase family. It depends on Mg(2+) as a cofactor.

It catalyses the reaction alpha,alpha-trehalose 6-phosphate + H2O = alpha,alpha-trehalose + phosphate. Functionally, catalyzes the hydrolysis of trehalose 6-phosphate to trehalose and phosphate; prevents the accumulation of toxic levels of trehalose 6-phosphate. This chain is Trehalose-phosphatase (gob-1), found in Caenorhabditis briggsae.